A 138-amino-acid polypeptide reads, in one-letter code: Basic phospholipase A2 myotoxin I (138 aa).

A signal peptide spans 1 to 16 (MRTLWIMAVLLVGVEG). 7 disulfide bridges follow: Cys-42–Cys-131, Cys-44–Cys-60, Cys-59–Cys-111, Cys-65–Cys-138, Cys-66–Cys-104, Cys-73–Cys-97, and Cys-91–Cys-102. Positions 43, 45, and 47 each coordinate Ca(2+). The active site involves His-63. Position 64 (Asp-64) interacts with Ca(2+). Residue Asp-105 is part of the active site.

Belongs to the phospholipase A2 family. Group II subfamily. D49 sub-subfamily. In terms of assembly, monomer. Homodimer; non-covalently linked (alternative/compact dimer conformation). Ca(2+) is required as a cofactor. Expressed by the venom gland.

The protein localises to the secreted. It carries out the reaction a 1,2-diacyl-sn-glycero-3-phosphocholine + H2O = a 1-acyl-sn-glycero-3-phosphocholine + a fatty acid + H(+). High level of membrane cholesterol content reduces cytolytic activity, whereas low level of membrane cholesterol content increases cytolytic activity. Its function is as follows. Snake venom phospholipase A2 (PLA2) that displays local myotoxic activity. It also displays anticoagulant action in plasma and edema-inducing activities. In addition, it shows cytotoxic activity to a variety of cell types and bactericidal activity to a variety of Gram-negative and Gram-positive bacteria. PLA2 catalyzes the calcium-dependent hydrolysis of the 2-acyl groups in 3-sn-phosphoglycerides. This chain is Basic phospholipase A2 myotoxin I, found in Bothrops asper (Terciopelo).